The sequence spans 319 residues: Selection and upkeep of intraepithelial T-cells protein 9 (319 aa).

Residues 1–26 (MESSASCLPGFFMSFLLLQNTVLTQA) form the signal peptide. The Ig-like V-type domain occupies 27-117 (MRSDIKINIQ…TNQEKKRSIV (91 aa)). The Extracellular portion of the chain corresponds to 27 to 139 (MRSDIKINIQ…LMSNKFSCPS (113 aa)). An intrachain disulfide couples Cys-47 to Cys-101. N-linked (GlcNAc...) asparagine glycosylation is present at Asn-105. The chain crosses the membrane as a helical span at residues 140–160 (IYLITIIFLNFLRGILVFCCL). The Cytoplasmic segment spans residues 161-183 (RRKPVCFRNLMSTVMEALYSKMG). A helical membrane pass occupies residues 184–204 (VCCLLIWECLLLVLYIAFLPI). Topologically, residues 205-228 (YVSFRSRAFLLDDTYPLYTNWLWN) are extracellular. A helical membrane pass occupies residues 229–249 (ICIILTVIMVLFPGLILCLLW). Over 250–319 (TLNCYGQVSS…DDTASTLFIS (70 aa)) the chain is Cytoplasmic.

Belongs to the SKINT family. As to expression, expressed in skin, thymus and testis.

It is found in the membrane. Functionally, may act by engaging a cell surface molecule on immature T-cells in the embryonic thymus. The chain is Selection and upkeep of intraepithelial T-cells protein 9 (Skint9) from Mus musculus (Mouse).